We begin with the raw amino-acid sequence, 410 residues long: Pyrophosphate--fructose 6-phosphate 1-phosphotransferase (410 aa).

Gly-12 is a diphosphate binding site. Mg(2+) is bound at residue Asp-121. Residues 149-151 (TID), 194-196 (MGR), Glu-266, and 323-326 (YFSR) contribute to the substrate site. Catalysis depends on Asp-151, which acts as the Proton acceptor.

It belongs to the phosphofructokinase type A (PFKA) family. PPi-dependent PFK group II subfamily. Clade 'P' sub-subfamily. As to quaternary structure, homodimer or homotetramer. It depends on Mg(2+) as a cofactor.

It is found in the cytoplasm. It catalyses the reaction beta-D-fructose 6-phosphate + diphosphate = beta-D-fructose 1,6-bisphosphate + phosphate + H(+). It functions in the pathway carbohydrate degradation; glycolysis; D-glyceraldehyde 3-phosphate and glycerone phosphate from D-glucose: step 3/4. Non-allosteric. In terms of biological role, catalyzes the phosphorylation of D-fructose 6-phosphate, the first committing step of glycolysis. Uses inorganic phosphate (PPi) as phosphoryl donor instead of ATP like common ATP-dependent phosphofructokinases (ATP-PFKs), which renders the reaction reversible, and can thus function both in glycolysis and gluconeogenesis. Consistently, PPi-PFK can replace the enzymes of both the forward (ATP-PFK) and reverse (fructose-bisphosphatase (FBPase)) reactions. This Mastigamoeba balamuthi (Phreatamoeba balamuthi) protein is Pyrophosphate--fructose 6-phosphate 1-phosphotransferase.